Here is a 365-residue protein sequence, read N- to C-terminus: Alanine racemase (365 aa).

Residue Lys-32 is the Proton acceptor; specific for D-alanine of the active site. An N6-(pyridoxal phosphate)lysine modification is found at Lys-32. Arg-128 provides a ligand contact to substrate. Catalysis depends on Tyr-257, which acts as the Proton acceptor; specific for L-alanine. Met-305 lines the substrate pocket.

The protein belongs to the alanine racemase family. The cofactor is pyridoxal 5'-phosphate.

The catalysed reaction is L-alanine = D-alanine. It functions in the pathway amino-acid biosynthesis; D-alanine biosynthesis; D-alanine from L-alanine: step 1/1. Its function is as follows. Catalyzes the interconversion of L-alanine and D-alanine. May also act on other amino acids. The chain is Alanine racemase (alr) from Francisella tularensis subsp. holarctica (strain FTNF002-00 / FTA).